Consider the following 116-residue polypeptide: UPF0102 protein Sala_0262 (116 aa).

The protein belongs to the UPF0102 family.

The sequence is that of UPF0102 protein Sala_0262 from Sphingopyxis alaskensis (strain DSM 13593 / LMG 18877 / RB2256) (Sphingomonas alaskensis).